We begin with the raw amino-acid sequence, 397 residues long: Sulfate adenylyltransferase (397 aa).

The protein belongs to the sulfate adenylyltransferase family.

The enzyme catalyses sulfate + ATP + H(+) = adenosine 5'-phosphosulfate + diphosphate. It functions in the pathway sulfur metabolism; hydrogen sulfide biosynthesis; sulfite from sulfate: step 1/3. The sequence is that of Sulfate adenylyltransferase (sat) from Allochromatium vinosum (strain ATCC 17899 / DSM 180 / NBRC 103801 / NCIMB 10441 / D) (Chromatium vinosum).